A 146-amino-acid chain; its full sequence is Anti-sigma F factor (146 aa).

The protein belongs to the anti-sigma-factor family.

The catalysed reaction is L-seryl-[protein] + ATP = O-phospho-L-seryl-[protein] + ADP + H(+). The enzyme catalyses L-threonyl-[protein] + ATP = O-phospho-L-threonyl-[protein] + ADP + H(+). In terms of biological role, binds to sigma F and blocks its ability to form an RNA polymerase holoenzyme (E-sigma F). Phosphorylates SpoIIAA on a serine residue. This phosphorylation may enable SpoIIAA to act as an anti-anti-sigma factor that counteracts SpoIIAB and thus releases sigma F from inhibition. The sequence is that of Anti-sigma F factor from Geobacillus stearothermophilus (Bacillus stearothermophilus).